A 270-amino-acid chain; its full sequence is Sec-independent protein translocase protein TatC (270 aa).

6 helical membrane-spanning segments follow: residues 35-55 (LILS…YRVQ), 93-113 (AFWA…WAFI), 124-144 (WGLP…VFGY), 176-196 (VVTF…AVIL), 209-229 (QGWR…TPTP), and 231-251 (PANM…GVVL).

Belongs to the TatC family. In terms of assembly, forms a complex with TatA.

Its subcellular location is the cell membrane. Part of the twin-arginine translocation (Tat) system that transports large folded proteins containing a characteristic twin-arginine motif in their signal peptide across membranes. This chain is Sec-independent protein translocase protein TatC, found in Deinococcus radiodurans (strain ATCC 13939 / DSM 20539 / JCM 16871 / CCUG 27074 / LMG 4051 / NBRC 15346 / NCIMB 9279 / VKM B-1422 / R1).